The primary structure comprises 492 residues: N-succinylglutamate 5-semialdehyde dehydrogenase (492 aa).

220 to 225 contributes to the NAD(+) binding site; that stretch reads GSANTG. Residues Glu243 and Cys277 contribute to the active site.

This sequence belongs to the aldehyde dehydrogenase family. AstD subfamily.

It catalyses the reaction N-succinyl-L-glutamate 5-semialdehyde + NAD(+) + H2O = N-succinyl-L-glutamate + NADH + 2 H(+). It participates in amino-acid degradation; L-arginine degradation via AST pathway; L-glutamate and succinate from L-arginine: step 4/5. In terms of biological role, catalyzes the NAD-dependent reduction of succinylglutamate semialdehyde into succinylglutamate. In Shigella flexneri, this protein is N-succinylglutamate 5-semialdehyde dehydrogenase.